The following is a 625-amino-acid chain: MAKVIGIDLGTTNSCVSVYERGESKVIPNKEGKNTTPSVVAFTDKGEVLVGDVAKRQAVTNPEKTIYSIKRIMGLMSNEKNAQEAKARLPYHVVDRNGACAVEIAGKVYTPQEISAKILMKLKEDAEAYLGEKVVDAVITVPAYFNDSQRKATKEAGTIAGLNVLRIINEPTAAALAYGLDKKEAEKILVYDLGGGTFDVTVLETGDSVVEVLATGGNAFLGGDDFDNLIIDWLVNEFKNETGIDLKKDVMASQRLKEAAENAKKELSSAQETEINLPFITADATGPKHLVKKLTRAKFEGMIESLVAETITKINEVVKEAGLSKSDVKEVVMVGGSTRVPLVQEEVKKAFGKELNKSVNPDEVVAIGAAIQGAVIKGDVKDVLLLDVTPLSLGIETLGGVMTKIIEKGTTIPVKKNQTFSTAEDNQSAVTIHVLQGEREFARDNKSLGQFNLEGIPSAPRGVPQIEVEFDIDANGILTVSAKDKATGKAQNITISGSSGLSEDEINNMVKDAELHKEDDKKRKEAVEARNSADALVHQTEKSMNELGEKVPAEDRSNIEAALNDLKETLKDENASKEQIDAKVQALSAASHKLAEAMYKKDDNASGEQSGGKKKDDDVIDAEVE.

At Thr-197 the chain carries Phosphothreonine; by autocatalysis. Residues 598–625 (MYKKDDNASGEQSGGKKKDDDVIDAEVE) form a disordered region.

The protein belongs to the heat shock protein 70 family.

In terms of biological role, acts as a chaperone. In Campylobacter curvus (strain 525.92), this protein is Chaperone protein DnaK.